The sequence spans 78 residues: Defensin-like protein 173 (78 aa).

An N-terminal signal peptide occupies residues 1-23 (MAKAPSPLVFPIIFLIIFALVEP). Disulfide bonds link Cys27/Cys71, Cys34/Cys56, Cys40/Cys65, and Cys44/Cys67.

The protein belongs to the DEFL family.

It is found in the secreted. This chain is Defensin-like protein 173 (LCR63), found in Arabidopsis thaliana (Mouse-ear cress).